The sequence spans 535 residues: MEPVLNLNNEVVKLRKDVKKVKVLIIRKLTRHIAKLKSKKGTEELILKNQRRAQRLLEEIHSVKELKPDDVTKTALRKEISFEKVCKKPNSTAEERALARLATHPLLKQKITAIKEAIKAFKDARKTAAEGEREREKDEPEQVTKIKETKKPVQAKLNKNTEEIKSAKEHVKEEKCKNLLEDSDKGTEKALELPYVQENLPEQTAENKEQPKAQDVERPAVERPAVERPAVERPAVERPAVERPAVERPAVERPAVERPAVERPAVERPAVERPAVERPAVERPAVERPAVERPAVERPAVERPAVERPAVERPAVERPAVERPVVESPAVERPPVESPPKKKACLEQELGCELSDIEDSDKEKEYFDDSTEERFYKHSSSFEDSDSGSDNDFFIGKIRRTKKKKSDKDGSKQKEEKVPPTKEKAQTSEVQKEIPTAKSMKLKSVFCKSLSQTKPKPSFTKRETNFRQERNKRPVMPQASPLAKKPLQSKATSVRQPGRKLEAQPLHPSWEASRKRKEQQAQITKFQGKKIVFDD.

Coiled-coil stretches lie at residues 5–27 (LNLN…LIIR) and 107–177 (LKQK…EKCK). Basic and acidic residues-rich tracts occupy residues 128-151 (AAEG…ETKK), 159-191 (KNTE…EKAL), 205-325 (AENK…ERPV), 361-376 (DKEK…ERFY), 406-432 (SDKD…EVQK), and 460-472 (TKRE…ERNK). 2 disordered regions span residues 128 to 435 (AAEG…KEIP) and 453 to 535 (TKPK…VFDD).

The protein resides in the cytoplasm. It is found in the perinuclear region. Functionally, may be involved in regulating transcriptional activation of cardiac genes during the aging process. May play a role in biosynthesis and/or processing of SLC2A4 in adipose cells. The chain is Serum response factor-binding protein 1 from Xenopus tropicalis (Western clawed frog).